The following is a 525-amino-acid chain: GMP synthase [glutamine-hydrolyzing] (525 aa).

A Glutamine amidotransferase type-1 domain is found at 9 to 207 (RILILDFGSQ…VRDICQCEAL (199 aa)). Cys-86 acts as the Nucleophile in catalysis. Catalysis depends on residues His-181 and Glu-183. The 193-residue stretch at 208–400 (WTPAKIIDDA…LGLPYDMLYR (193 aa)) folds into the GMPS ATP-PPase domain. Residue 235-241 (SGGVDSS) coordinates ATP.

As to quaternary structure, homodimer.

It carries out the reaction XMP + L-glutamine + ATP + H2O = GMP + L-glutamate + AMP + diphosphate + 2 H(+). It participates in purine metabolism; GMP biosynthesis; GMP from XMP (L-Gln route): step 1/1. In terms of biological role, catalyzes the synthesis of GMP from XMP. The chain is GMP synthase [glutamine-hydrolyzing] from Salmonella typhi.